Consider the following 146-residue polypeptide: Large ribosomal subunit protein uL15 (146 aa).

The interval methionine 1 to glutamate 51 is disordered. Gly residues-rich tracts occupy residues arginine 21–serine 31 and serine 42–glutamate 51.

Belongs to the universal ribosomal protein uL15 family. Part of the 50S ribosomal subunit.

In terms of biological role, binds to the 23S rRNA. The sequence is that of Large ribosomal subunit protein uL15 from Anoxybacillus flavithermus (strain DSM 21510 / WK1).